The sequence spans 899 residues: UPF0182 protein Mhun_1303 (899 aa).

7 helical membrane-spanning segments follow: residues 6–26, 39–59, 93–113, 136–156, 196–216, 240–260, and 271–291; these read LLIF…DLLS, VFLT…LLFF, VAAG…LAFL, LPFY…TLII, FLPQ…AFLW, ITIP…LLFL, and IAYG…AGFL.

The protein belongs to the UPF0182 family.

The protein resides in the cell membrane. In Methanospirillum hungatei JF-1 (strain ATCC 27890 / DSM 864 / NBRC 100397 / JF-1), this protein is UPF0182 protein Mhun_1303.